Here is a 283-residue protein sequence, read N- to C-terminus: Protease HtpX (283 aa).

The next 2 membrane-spanning stretches (helical) occupy residues 4 to 24 (IALF…ILSV) and 33 to 53 (GGIL…SLFM). Zn(2+) is bound at residue H139. E140 is a catalytic residue. H143 lines the Zn(2+) pocket. Helical transmembrane passes span 147 to 167 (GDMV…IFLS) and 192 to 212 (FLVS…IAMW). E218 is a Zn(2+) binding site.

It belongs to the peptidase M48B family. Zn(2+) is required as a cofactor.

Its subcellular location is the cell inner membrane. The sequence is that of Protease HtpX from Glaesserella parasuis serovar 5 (strain SH0165) (Haemophilus parasuis).